An 88-amino-acid polypeptide reads, in one-letter code: Phosphocarrier protein HPr (88 aa).

Positions M1–E88 constitute an HPr domain. H15 functions as the Pros-phosphohistidine intermediate in the catalytic mechanism. S46 is modified (phosphoserine; by HPrK/P).

Belongs to the HPr family.

The protein resides in the cytoplasm. Its activity is regulated as follows. Phosphorylation on Ser-46 inhibits the phosphoryl transfer from enzyme I to HPr. Functionally, general (non sugar-specific) component of the phosphoenolpyruvate-dependent sugar phosphotransferase system (sugar PTS). This major carbohydrate active-transport system catalyzes the phosphorylation of incoming sugar substrates concomitantly with their translocation across the cell membrane. The phosphoryl group from phosphoenolpyruvate (PEP) is transferred to the phosphoryl carrier protein HPr by enzyme I. Phospho-HPr then transfers it to the PTS EIIA domain. Its function is as follows. P-Ser-HPr interacts with the catabolite control protein A (CcpA), forming a complex that binds to DNA at the catabolite response elements cre, operator sites preceding a large number of catabolite-regulated genes. Thus, P-Ser-HPr is a corepressor in carbon catabolite repression (CCR), a mechanism that allows bacteria to coordinate and optimize the utilization of available carbon sources. P-Ser-HPr also plays a role in inducer exclusion, in which it probably interacts with several non-PTS permeases and inhibits their transport activity. This chain is Phosphocarrier protein HPr (ptsH), found in Lactococcus lactis subsp. lactis (strain IL1403) (Streptococcus lactis).